The sequence spans 747 residues: Cysteine--tRNA ligase, cytoplasmic (747 aa).

Residues 1 to 26 (MTESWEQGKGRRTQPPWSAPNTNEQP) are disordered. Residues 15–25 (PPWSAPNTNEQ) are compositionally biased toward polar residues. Cys-54 is a binding site for Zn(2+). Gly-55 serves as a coordination point for L-cysteine. The 'HIGH' region motif lies at 56-66 (PTVYDASHMGH). Thr-95 is a binding site for L-cysteine. The 'KIIK' region signature appears at 100 to 103 (KIIK). Residues Cys-347, His-372, and Glu-376 each coordinate Zn(2+). His-372 is an L-cysteine binding site. The 'KMSKS' region signature appears at 405-409 (KMSKS). Lys-408 serves as a coordination point for ATP. Over residues 651–683 (EEKRKAEEEKQRKKEEAARKKQQQEAAKLEKMK) the composition is skewed to basic and acidic residues. Disordered regions lie at residues 651–685 (EEKRKAEEEKQRKKEEAARKKQQQEAAKLEKMKIS) and 700–721 (FDESGFPTHDTEGKELSKGQTK).

Belongs to the class-I aminoacyl-tRNA synthetase family. Homodimer. Zn(2+) serves as cofactor.

The protein localises to the cytoplasm. The catalysed reaction is tRNA(Cys) + L-cysteine + ATP = L-cysteinyl-tRNA(Cys) + AMP + diphosphate. Functionally, catalyzes the ATP-dependent ligation of cysteine to tRNA(Cys). The sequence is that of Cysteine--tRNA ligase, cytoplasmic (cars1) from Xenopus laevis (African clawed frog).